A 412-amino-acid chain; its full sequence is uncharacterized protein (412 aa).

The N-terminal stretch at 1–21 (MIIPMLRILLIVLFVLNLVTS) is a signal peptide. Disordered stretches follow at residues 85 to 134 (QPPA…STTT), 250 to 294 (STTE…TPGT), and 327 to 357 (VELG…HVRE). Over residues 88 to 105 (ASLTSLPAAPPSAQVAPP) the composition is skewed to low complexity. Residues 124-134 (TPQASISSTTT) are compositionally biased toward polar residues. Low complexity-rich tracts occupy residues 250 to 259 (STTENTTEQS) and 266 to 293 (TTST…GTPG). Over residues 330–347 (GEGDDDEENDDDSSEEEE) the composition is skewed to acidic residues. The span at 348 to 357 (TKPPARHVRE) shows a compositional bias: basic and acidic residues. Residues 371–408 (CDEEEDDKGKICKLWAAGGLCGTHKPTMFLFCRKTCLC) form the ShKT domain.

This is an uncharacterized protein from Caenorhabditis elegans.